A 1052-amino-acid chain; its full sequence is Malignant fibrous histiocytoma-amplified sequence 1 (1052 aa).

The residue at position 2 (Ala2) is an N-acetylalanine. 13 LRR repeats span residues Asp64–Ala85, Ser88–Leu109, His112–Ala133, Glu136–Leu157, His159–Leu180, Arg182–Leu203, Ala205–Leu226, Ala228–Leu249, Ser251–Leu272, Arg274–Ala296, Gly297–Leu318, Arg320–Leu341, and Gly343–Leu364. Positions Asp64 to Leu364 are required for interaction with PJA2. Positions Asp64–Arg649 are required for interaction with PPP2R2A. The Roc domain maps to Gln403 to Arg649. Lys601 is subject to N6-acetyllysine.

In terms of assembly, interacts with RAF1. Interacts with HSPD1. Interacts with PPP2CA; retains PPP2CA into the cytoplasm and excludes it from the nucleus. Interacts with PPP2R2A; the interaction is direct. Interacts with PJA2. In terms of processing, ubiquitinated. Ubiquitination by PJA2 does not lead MFHAS1 to proteasomal degradation but positively regulates its function in polarization of macrophages. In terms of tissue distribution, ubiquitously expressed. Overexpressed in malignant fibrous histiocytomas. Expressed in red blood cells (at protein level).

The protein localises to the cytoplasm. Its function is as follows. Probable GTP-binding protein. Functions in innate immunity and more specifically the inflammatory response as a regulator of the Toll-like receptor TLR2 and TLR4 signaling pathways. Negatively regulates the part of the TLR4 signaling pathway that leads to the activation of the transcription factor AP-1. By retaining the phosphatase complex PP2A into the cytoplasm, prevents the dephosphorylation of the AP-1 subunit JUN which is required for proper activation of the transcription factor. Both inhibits and activates the TLR2-dependent signaling pathway. Positively regulates the TLR2 signaling pathway to activate specifically the downstream p38 and JNK MAP kinases and promote the polarization of macrophages toward the pro-inflammatory M1 phenotype. It may also play a role in the regulation of inflammation induced by high glucose through the PKB/AKT signaling pathway. Also involved in erythrocyte differentiation through activation of the ERK1/ERK2 signaling pathway. This Homo sapiens (Human) protein is Malignant fibrous histiocytoma-amplified sequence 1.